The chain runs to 188 residues: GMP synthase [glutamine-hydrolyzing] subunit A (188 aa).

Positions 2-188 constitute a Glutamine amidotransferase type-1 domain; it reads KIYIIDNGGQ…FKNFIEKCRR (187 aa). Catalysis depends on Cys79, which acts as the Nucleophile. Catalysis depends on residues His166 and Glu168.

Heterodimer composed of a glutamine amidotransferase subunit (A) and a GMP-binding subunit (B).

The enzyme catalyses XMP + L-glutamine + ATP + H2O = GMP + L-glutamate + AMP + diphosphate + 2 H(+). It functions in the pathway purine metabolism; GMP biosynthesis; GMP from XMP (L-Gln route): step 1/1. Catalyzes the synthesis of GMP from XMP. The chain is GMP synthase [glutamine-hydrolyzing] subunit A from Picrophilus torridus (strain ATCC 700027 / DSM 9790 / JCM 10055 / NBRC 100828 / KAW 2/3).